Reading from the N-terminus, the 1026-residue chain is Multidrug resistance protein MdtC (1026 aa).

11 helical membrane-spanning segments follow: residues 15 to 35 (ILIA…LPVA), 333 to 353 (EVEE…FLFL), 360 to 380 (LIPA…MYLC), 387 to 407 (LSLM…IVVL), 431 to 451 (VGFT…PLLL), 463 to 483 (FAVT…TLTP), 528 to 548 (LVGV…IAIP), 853 to 873 (LILI…LYES), 897 to 917 (LFNA…IGIV), 953 to 973 (PIMM…LSGG), and 984 to 1004 (ITIV…TPVV).

Belongs to the resistance-nodulation-cell division (RND) (TC 2.A.6) family. MdtC subfamily. As to quaternary structure, part of a tripartite efflux system composed of MdtA, MdtB and MdtC. MdtC forms a heteromultimer with MdtB.

It is found in the cell inner membrane. The protein is Multidrug resistance protein MdtC of Salmonella dublin (strain CT_02021853).